The following is a 262-amino-acid chain: Calbindin (262 aa).

Thr-2 carries the post-translational modification N-acetylthreonine. 5 consecutive EF-hand domains span residues 12–47, 54–89, 99–134, 143–178, and 187–222; these read ISAA…LQQA, DLTP…EENF, KSSE…LLQK, KLTE…QENF, and MCAK…LCEK. Residues Asp-25, Asp-27, Asn-29, Tyr-31, and Glu-36 each contribute to the Ca(2+) site. Residues Asp-112, Asp-114, Ser-116, Glu-123, Asp-156, Asn-158, Asp-160, Lys-162, Glu-167, Asp-200, Asp-202, Asn-204, Tyr-206, and Glu-211 each coordinate Ca(2+).

Belongs to the calbindin family. In terms of tissue distribution, highly abundant in supporting cells. Also present in hair cells.

In terms of biological role, buffers cytosolic calcium. May stimulate a membrane Ca(2+)-ATPase and a 3',5'-cyclic nucleotide phosphodiesterase. The protein is Calbindin (CALB1) of Gallus gallus (Chicken).